Consider the following 332-residue polypeptide: MSERVLIDGYNRRVDYLRMSVTDRCDFRCVYCMAEDMQFLPRQRVLTLEEIYQLAQSFVALGTRKIRLTGGEPLIRPGVVGLCKQIAALPGLRELCLTTNGSQLGKLASPLFDAGVKRLNVSLDSLDAERFKQMTRTGDLAQVIDGIDAARAAGFTRTKLNCVVMQGRNDHEINDLVQFAIERDLDISFIEEMPLGIISEHSRAESFFSSTQVRERIAERYTLIDSAESTHGPSRYWRLAEAPHIRLGFISPHSHNFCGTCNRVRLTVEGRLLLCLGNEHSVDLKAVLRAHPGQPERLEKAIIEAMKLKPYRHNFEVNDDVQVVRFMNMTGG.

Residues 9–220 form the Radical SAM core domain; the sequence is GYNRRVDYLR…TQVRERIAER (212 aa). R18 is a binding site for GTP. Positions 25 and 29 each coordinate [4Fe-4S] cluster. Residue Y31 coordinates S-adenosyl-L-methionine. Residue C32 participates in [4Fe-4S] cluster binding. Residue R67 coordinates GTP. G71 is an S-adenosyl-L-methionine binding site. T98 lines the GTP pocket. S122 provides a ligand contact to S-adenosyl-L-methionine. GTP is bound at residue K159. M193 is an S-adenosyl-L-methionine binding site. 2 residues coordinate [4Fe-4S] cluster: C258 and C261. GTP is bound at residue 263 to 265; the sequence is RVR. C275 lines the [4Fe-4S] cluster pocket.

The protein belongs to the radical SAM superfamily. MoaA family. Monomer and homodimer. The cofactor is [4Fe-4S] cluster.

It catalyses the reaction GTP + AH2 + S-adenosyl-L-methionine = (8S)-3',8-cyclo-7,8-dihydroguanosine 5'-triphosphate + 5'-deoxyadenosine + L-methionine + A + H(+). It functions in the pathway cofactor biosynthesis; molybdopterin biosynthesis. Functionally, catalyzes the cyclization of GTP to (8S)-3',8-cyclo-7,8-dihydroguanosine 5'-triphosphate. The sequence is that of GTP 3',8-cyclase from Pseudomonas fluorescens (strain Pf0-1).